Reading from the N-terminus, the 464-residue chain is 2-oxoadipate dioxygenase/decarboxylase (464 aa).

Residues histidine 70, arginine 74, and histidine 226 each coordinate 2-oxoadipate. Histidine 70 contacts Fe(2+). Histidine 226 and glutamate 294 together coordinate Fe(2+). Valine 402 serves as a coordination point for 2-oxoadipate.

It belongs to the 2-oxoadipate dioxygenase/decarboxylase family. It depends on Fe(2+) as a cofactor.

It carries out the reaction 2-oxoadipate + O2 = (R)-2-hydroxyglutarate + CO2. Its pathway is amino-acid degradation. Its activity is regulated as follows. Inhibited by EDTA. In terms of biological role, catalyzes the decarboxylation and hydroxylation of 2-oxoadipate (2OA) to form D-2-hydroxyglutarate (D-2-HGA). Is specific for 2-oxoadipate. Is involved in a D-lysine catabolic pathway. The sequence is that of 2-oxoadipate dioxygenase/decarboxylase from Pseudomonas putida (strain ATCC 47054 / DSM 6125 / CFBP 8728 / NCIMB 11950 / KT2440).